Here is a 318-residue protein sequence, read N- to C-terminus: Ribose-phosphate pyrophosphokinase 1 (318 aa).

ATP-binding positions include 43–45 and 102–103; these read DGE and RQ. Mg(2+)-binding residues include His-136 and Asp-176. The active site involves Lys-199. D-ribose 5-phosphate-binding positions include Arg-201, Asp-225, and 229–233; that span reads DTAGT.

The protein belongs to the ribose-phosphate pyrophosphokinase family. Class I subfamily. Homohexamer. Requires Mg(2+) as cofactor.

It is found in the cytoplasm. It carries out the reaction D-ribose 5-phosphate + ATP = 5-phospho-alpha-D-ribose 1-diphosphate + AMP + H(+). It participates in metabolic intermediate biosynthesis; 5-phospho-alpha-D-ribose 1-diphosphate biosynthesis; 5-phospho-alpha-D-ribose 1-diphosphate from D-ribose 5-phosphate (route I): step 1/1. Involved in the biosynthesis of the central metabolite phospho-alpha-D-ribosyl-1-pyrophosphate (PRPP) via the transfer of pyrophosphoryl group from ATP to 1-hydroxyl of ribose-5-phosphate (Rib-5-P). The protein is Ribose-phosphate pyrophosphokinase 1 of Listeria innocua serovar 6a (strain ATCC BAA-680 / CLIP 11262).